Reading from the N-terminus, the 306-residue chain is 2-dehydro-3-deoxy-D-gluconate/2-dehydro-3-deoxy-phosphogluconate aldolase (306 aa).

Residues Thr-61–Thr-62, Tyr-148–Tyr-150, and Lys-173–Thr-175 each bind substrate. Lys-173 (schiff-base intermediate with substrate) is an active-site residue.

Belongs to the DapA family. KDPG aldolase subfamily. In terms of assembly, homotetramer; dimer of dimers.

The catalysed reaction is 2-dehydro-3-deoxy-6-phospho-D-gluconate = D-glyceraldehyde 3-phosphate + pyruvate. The enzyme catalyses 2-dehydro-3-deoxy-D-gluconate = D-glyceraldehyde + pyruvate. It functions in the pathway carbohydrate acid metabolism; 2-dehydro-3-deoxy-D-gluconate degradation; D-glyceraldehyde 3-phosphate and pyruvate from 2-dehydro-3-deoxy-D-gluconate: step 2/2. Involved in the degradation of glucose via the Entner-Doudoroff pathway. Catalyzes the reversible cleavage of 2-keto-3-deoxy-6-phosphogluconate (KDPG) and 2-keto-3-deoxygluconate (KDG) forming pyruvate and glyceraldehyde 3-phosphate or glyceraldehyde, respectively. It is not able to use 2-keto-3-deoxy-6-phosphogalactonate (KDPGal) and 2-keto-3-deoxygalactonate (KDGal) as substrate. The protein is 2-dehydro-3-deoxy-D-gluconate/2-dehydro-3-deoxy-phosphogluconate aldolase (kdgA) of Thermoproteus tenax.